A 111-amino-acid chain; its full sequence is PHD finger-like domain-containing protein 5A (111 aa).

The protein belongs to the PHF5 family.

This chain is PHD finger-like domain-containing protein 5A, found in Drosophila melanogaster (Fruit fly).